The chain runs to 403 residues: 5,7-dihydroxy-2-methylchromone synthase (403 aa).

His68 is a binding site for CoA. Residue Cys174 is part of the active site. The residue at position 174 (Cys174) is a Cysteine sulfinic acid (-SO2H). CoA is bound by residues Leu277, Ser281, and 318 to 321; that span reads GGRA.

Belongs to the thiolase-like superfamily. Chalcone/stilbene synthases family. Homodimer.

It carries out the reaction 5 malonyl-CoA + 4 H(+) = 5,7-dihydroxy-2-methyl-4H-chromen-4-one + 5 CO2 + 5 CoA + H2O. It functions in the pathway secondary metabolite biosynthesis; flavonoid biosynthesis. Functionally, catalyzes the iterative condensations of 5 molecules of malonyl-CoA to produce a pentaketide 5,7-dihydroxy-2-methylchromone. This Aloe arborescens (Kidachi aloe) protein is 5,7-dihydroxy-2-methylchromone synthase.